A 60-amino-acid chain; its full sequence is Potassium channel toxin alpha-KTx 3.6 (60 aa).

An N-terminal signal peptide occupies residues M1–G22. Cystine bridges form between C29–C49, C35–C54, and C39–C56. K59 bears the Lysine amide mark.

This sequence belongs to the short scorpion toxin superfamily. Potassium channel inhibitor family. Alpha-KTx 03 subfamily. In terms of tissue distribution, expressed by the venom gland.

The protein localises to the secreted. Blocks voltage-gated potassium channels. At 2 uM, blocks rat Kv1.1/KCNA1 and Kv1.3/KCNA3, has a strong effect on rat Kv1.2/KCNA2 and Kv1.6/KCNA6 as well as a moderate effect on Shaker IR. The sequence is that of Potassium channel toxin alpha-KTx 3.6 from Olivierus martensii (Manchurian scorpion).